The sequence spans 1254 residues: AF4/FMR2 family member 3 (1254 aa).

Basic and acidic residues predominate over residues 45 to 62 (YEPDRNALRRKERERRSQ). 5 disordered regions span residues 45 to 90 (YEPD…GDEL), 139 to 190 (AESR…AAQQ), 261 to 324 (RPMD…GENN), 350 to 534 (EPSK…EGQD), and 552 to 752 (KTTC…SVGS). Polar residues-rich tracts occupy residues 67-76 (DSGSFNSGYS) and 143-158 (AQPQPSTVCSTASSTP). Over residues 359–369 (KDSQLVSSGHS) the composition is skewed to polar residues. The span at 406-418 (QQAAQRTALRALA) shows a compositional bias: low complexity. Residues 421–433 (SVVQQTNCRGSAP) show a composition bias toward polar residues. A compositionally biased stretch (low complexity) spans 441 to 472 (SSSSGGSSSSSDSESTSGSDSETESSSSSSES). Residues 552–561 (KTTCKEEQRP) are compositionally biased toward basic and acidic residues. The span at 577–605 (SPPAAVAVTAAALPPAVPSAPTESAPAPT) shows a compositional bias: low complexity. The span at 615–633 (RRTERTSAGDGANCHRPEE) shows a compositional bias: basic and acidic residues. 2 stretches are compositionally biased toward low complexity: residues 694-704 (TESSSSSSSSD) and 732-749 (AASSNNNSNSNSSTSRAS). S782 bears the Phosphoserine mark. The segment at 813 to 883 (PGVLSAPSAK…ASTNNTLSGN (71 aa)) is disordered. Over residues 857–869 (REIKKVQGRKESA) the composition is skewed to basic and acidic residues. Polar residues predominate over residues 873–883 (AASTNNTLSGN). S908 bears the Phosphoserine mark. Disordered regions lie at residues 919 to 991 (ASED…HRDC) and 1128 to 1171 (AAQA…SGLS). Composition is skewed to polar residues over residues 922–941 (DLTSSSRPHGNGLLTSASSN) and 960–985 (ASHNSSENGTLHSKSRPQTEPWSPGS). 2 stretches are compositionally biased toward low complexity: residues 1132 to 1146 (PSPWGSSGKSTGSPS) and 1154 to 1171 (PASSVGSQGSLSSSSGLS).

This sequence belongs to the AF4 family. Highest levels found in lymphoid tissues, lower levels in brain and lung.

It localises to the nucleus. Functionally, putative transcription activator that may function in lymphoid development and oncogenesis. This Mus musculus (Mouse) protein is AF4/FMR2 family member 3 (Aff3).